Consider the following 437-residue polypeptide: Adenylosuccinate synthetase (437 aa).

GTP-binding positions include 12-18 (GDEGKGK) and 40-42 (GHT). Asp-13 functions as the Proton acceptor in the catalytic mechanism. Positions 13 and 40 each coordinate Mg(2+). Residues 13–16 (DEGK), 38–41 (NAGH), Thr-128, Arg-142, Gln-223, Thr-238, and Arg-302 contribute to the IMP site. His-41 acts as the Proton donor in catalysis. Residue 298 to 304 (TTTGRRR) coordinates substrate. GTP-binding positions include Arg-304, 330–332 (KLD), and 412–414 (SLG).

Belongs to the adenylosuccinate synthetase family. Homodimer. The cofactor is Mg(2+).

Its subcellular location is the cytoplasm. The catalysed reaction is IMP + L-aspartate + GTP = N(6)-(1,2-dicarboxyethyl)-AMP + GDP + phosphate + 2 H(+). Its pathway is purine metabolism; AMP biosynthesis via de novo pathway; AMP from IMP: step 1/2. Its function is as follows. Plays an important role in the de novo pathway of purine nucleotide biosynthesis. Catalyzes the first committed step in the biosynthesis of AMP from IMP. The chain is Adenylosuccinate synthetase from Prochlorococcus marinus (strain MIT 9313).